Here is a 309-residue protein sequence, read N- to C-terminus: tRNA dimethylallyltransferase (309 aa).

10-17 serves as a coordination point for ATP; sequence GPTAVGKT. 12-17 lines the substrate pocket; the sequence is TAVGKT. Residues 35–38 are interaction with substrate tRNA; that stretch reads DSMQ.

It belongs to the IPP transferase family. Monomer. Requires Mg(2+) as cofactor.

The enzyme catalyses adenosine(37) in tRNA + dimethylallyl diphosphate = N(6)-dimethylallyladenosine(37) in tRNA + diphosphate. Its function is as follows. Catalyzes the transfer of a dimethylallyl group onto the adenine at position 37 in tRNAs that read codons beginning with uridine, leading to the formation of N6-(dimethylallyl)adenosine (i(6)A). This Clostridium botulinum (strain Eklund 17B / Type B) protein is tRNA dimethylallyltransferase.